The chain runs to 216 residues: Probable transaldolase (216 aa).

Lys83 acts as the Schiff-base intermediate with substrate in catalysis.

Belongs to the transaldolase family. Type 3B subfamily.

Its subcellular location is the cytoplasm. The catalysed reaction is D-sedoheptulose 7-phosphate + D-glyceraldehyde 3-phosphate = D-erythrose 4-phosphate + beta-D-fructose 6-phosphate. Its pathway is carbohydrate degradation; pentose phosphate pathway; D-glyceraldehyde 3-phosphate and beta-D-fructose 6-phosphate from D-ribose 5-phosphate and D-xylulose 5-phosphate (non-oxidative stage): step 2/3. Transaldolase is important for the balance of metabolites in the pentose-phosphate pathway. This chain is Probable transaldolase, found in Thermosipho africanus (strain TCF52B).